The following is a 1225-amino-acid chain: Clustered mitochondria protein homolog (1225 aa).

Positions 1–22 are disordered; sequence MAQTNGEMEHSKESPEQITNGN. The region spanning 281–532 is the Clu domain; sequence QESNNQKDLL…RVTPLDVAWN (252 aa). Disordered stretches follow at residues 577 to 605 and 846 to 878; these read EEAA…EALD and ANGV…SAAA. 3 TPR repeats span residues 949-982, 991-1024, and 1033-1066; these read AKLY…TERT, ILSY…WKII, and ITTM…CESL. Residues 1153-1184 show a composition bias toward polar residues; that stretch reads RTTLGTQIQPQVGQSTADVSAPSQASNSSIDS. A disordered region spans residues 1153-1225; the sequence is RTTLGTQIQP…KLRGSKKSSA (73 aa).

It belongs to the CLU family. In terms of assembly, may associate with the eukaryotic translation initiation factor 3 (eIF-3) complex.

It localises to the cytoplasm. Functionally, mRNA-binding protein involved in proper cytoplasmic distribution of mitochondria. This chain is Clustered mitochondria protein homolog, found in Emericella nidulans (strain FGSC A4 / ATCC 38163 / CBS 112.46 / NRRL 194 / M139) (Aspergillus nidulans).